Reading from the N-terminus, the 518-residue chain is Glutamate--cysteine ligase (518 aa).

Belongs to the glutamate--cysteine ligase type 1 family. Type 1 subfamily.

It carries out the reaction L-cysteine + L-glutamate + ATP = gamma-L-glutamyl-L-cysteine + ADP + phosphate + H(+). It functions in the pathway sulfur metabolism; glutathione biosynthesis; glutathione from L-cysteine and L-glutamate: step 1/2. This chain is Glutamate--cysteine ligase, found in Klebsiella pneumoniae subsp. pneumoniae (strain ATCC 700721 / MGH 78578).